Reading from the N-terminus, the 196-residue chain is Small ribosomal subunit protein uS4c (196 aa).

The disordered stretch occupies residues 17–36 (ALPGLTRKTPKSGSNLKKKF). Residues 89-169 (MRLDNILFRL…LPKHLTIDTL (81 aa)) form the S4 RNA-binding domain.

The protein belongs to the universal ribosomal protein uS4 family. As to quaternary structure, part of the 30S ribosomal subunit. Contacts protein S5. The interaction surface between S4 and S5 is involved in control of translational fidelity.

Its subcellular location is the plastid. It localises to the chloroplast. Functionally, one of the primary rRNA binding proteins, it binds directly to 16S rRNA where it nucleates assembly of the body of the 30S subunit. In terms of biological role, with S5 and S12 plays an important role in translational accuracy. The sequence is that of Small ribosomal subunit protein uS4c (rps4) from Festuca gigantea (Giant fescue).